Here is a 61-residue protein sequence, read N- to C-terminus: Photosystem II reaction center protein K (61 aa).

A propeptide spanning residues 1–24 is cleaved from the precursor; sequence MPNILSLTCICFNSVLYPTSFFFA. The helical transmembrane segment at 32–52 threads the bilayer; it reads IFNPIVDIMPVIPLFFFLLAF.

Belongs to the PsbK family. In terms of assembly, PSII is composed of 1 copy each of membrane proteins PsbA, PsbB, PsbC, PsbD, PsbE, PsbF, PsbH, PsbI, PsbJ, PsbK, PsbL, PsbM, PsbT, PsbX, PsbY, PsbZ, Psb30/Ycf12, at least 3 peripheral proteins of the oxygen-evolving complex and a large number of cofactors. It forms dimeric complexes. Detected in both etioplasts and green leaves; PSII is only assembled in green leaves.

Its subcellular location is the plastid. It is found in the chloroplast thylakoid membrane. Functionally, one of the components of the core complex of photosystem II (PSII). PSII is a light-driven water:plastoquinone oxidoreductase that uses light energy to abstract electrons from H(2)O, generating O(2) and a proton gradient subsequently used for ATP formation. It consists of a core antenna complex that captures photons, and an electron transfer chain that converts photonic excitation into a charge separation. The protein is Photosystem II reaction center protein K of Hordeum vulgare (Barley).